A 253-amino-acid chain; its full sequence is Phosphoglycerate mutase 2 (253 aa).

Thr-3 bears the Phosphothreonine mark. Substrate-binding positions include 10–17 (RHGESTWN), 23–24 (CG), Arg-62, 89–92 (ERHY), Lys-100, and 116–117 (RR). Catalysis depends on His-11, which acts as the Tele-phosphohistidine intermediate. Phosphoserine is present on Ser-14. Glu-89 acts as the Proton donor/acceptor in catalysis. The residue at position 118 (Ser-118) is a Phosphoserine. A phosphotyrosine mark is found at Tyr-132 and Tyr-133. Ser-135 carries the phosphoserine modification. Phosphothreonine is present on Thr-152. Residue 187–188 (GN) participates in substrate binding.

The protein belongs to the phosphoglycerate mutase family. BPG-dependent PGAM subfamily. As to quaternary structure, homodimer. Interacts with ENO1. As to expression, expressed in the heart and muscle. Not found in the liver and brain.

The enzyme catalyses (2R)-2-phosphoglycerate = (2R)-3-phosphoglycerate. It carries out the reaction (2R)-3-phospho-glyceroyl phosphate = (2R)-2,3-bisphosphoglycerate + H(+). Its function is as follows. Interconversion of 3- and 2-phosphoglycerate with 2,3-bisphosphoglycerate as the primer of the reaction. Can also catalyze the reaction of EC 5.4.2.4 (synthase), but with a reduced activity. This chain is Phosphoglycerate mutase 2 (PGAM2), found in Homo sapiens (Human).